Reading from the N-terminus, the 91-residue chain is MVSSVFDGIFTTPNYPVKAESYAEHLKGSYRNVYESLYNLKDDTGISVLDEHGFNAVNVTITAIIDPAAGEANDRPSKKCGSGNLRVEKLV.

A disordered region spans residues 71-91 (EANDRPSKKCGSGNLRVEKLV).

This is an uncharacterized protein from Archaeoglobus fulgidus (strain ATCC 49558 / DSM 4304 / JCM 9628 / NBRC 100126 / VC-16).